Here is a 708-residue protein sequence, read N- to C-terminus: Solute carrier family 15 member 1 (708 aa).

The helical transmembrane segment at Met1 to Val21 threads the bilayer. The Extracellular portion of the chain corresponds to Asn22–Thr53. An N-linked (GlcNAc...) asparagine glycan is attached at Asn50. The helical transmembrane segment at Ala54–Ala74 threads the bilayer. The Cytoplasmic portion of the chain corresponds to Asp75 to Lys82. The helical transmembrane segment at Thr83–Ile103 threads the bilayer. Over Asn104 to Leu118 the chain is Extracellular. An N-linked (GlcNAc...) asparagine glycan is attached at Asn117. The helical transmembrane segment at Ser119 to Ile139 threads the bilayer. The Cytoplasmic portion of the chain corresponds to Lys140–Arg161. The helical transmembrane segment at Phe162–Pro182 threads the bilayer. Residues Met183–Tyr198 lie on the Extracellular side of the membrane. A helical membrane pass occupies residues Pro199–Gly219. Residues Ser220–Gln276 are Cytoplasmic-facing. The chain crosses the membrane as a helical span at residues Ile277 to Phe297. Residues Asp298–Thr327 are Extracellular-facing. Residues Val328–Ile348 form a helical membrane-spanning segment. At Ala349–Met361 the chain is on the cytoplasmic side. A helical transmembrane segment spans residues Thr362–Ile382. Over Asp383–Leu584 the chain is Extracellular. An extracellular domain (ECD) region spans residues Asp383–Gln585. Residues Asn408, Asn439, Asn495, Asn499, Asn509, Asn514, Asn527, and Asn539 are each glycosylated (N-linked (GlcNAc...) asparagine). A helical transmembrane segment spans residues Gln585 to Glu605. The Cytoplasmic portion of the chain corresponds to Phe606–Leu619. Residues Gln620–Ala640 traverse the membrane as a helical segment. At Gly641–Glu645 the chain is on the extracellular side. The helical transmembrane segment at Gln646 to Ile666 threads the bilayer. Residues Met667–Met708 are Cytoplasmic-facing.

The protein belongs to the major facilitator superfamily. Proton-dependent oligopeptide transporter (POT/PTR) (TC 2.A.17) family. As to quaternary structure, interacts (via extracellular domain region) with trypsin.

It is found in the apical cell membrane. It catalyses the reaction a dipeptide(out) + H(+)(out) = a dipeptide(in) + H(+)(in). The catalysed reaction is an L-amino acid tripeptide(out) + H(+)(out) = an L-amino acid tripeptide(in) + H(+)(in). The enzyme catalyses L-alanyl-L-lysine(out) + H(+)(out) = L-alanyl-L-lysine(in) + H(+)(in). It carries out the reaction L-alanyl-L-proline(out) + H(+)(out) = L-alanyl-L-proline(in) + H(+)(in). It catalyses the reaction L-alanyl-L-valine(out) + H(+)(out) = L-alanyl-L-valine(in) + H(+)(in). The catalysed reaction is carnosine(out) + H(+)(out) = carnosine(in) + H(+)(in). The enzyme catalyses glycyl-L-glutamine(out) + H(+)(out) = glycyl-L-glutamine(in) + H(+)(in). It carries out the reaction glycyl-L-leucine(out) + H(+)(out) = glycyl-L-leucine(in) + H(+)(in). It catalyses the reaction glycyl-L-proline(out) + H(+)(out) = glycyl-L-proline(in) + H(+)(in). The catalysed reaction is glycyl-sarcosine(out) + H(+)(out) = glycyl-sarcosine(in) + H(+)(in). The enzyme catalyses L-leucyl-L-leucine(out) + H(+)(out) = L-leucyl-L-leucine(in) + H(+)(in). It carries out the reaction L-leucyl-L-proline(out) + H(+)(out) = L-leucyl-L-proline(in) + H(+)(in). It catalyses the reaction L-phenylalanyl-L-leucine(out) + H(+)(out) = L-phenylalanyl-L-leucine(in) + H(+)(in). The catalysed reaction is L-phenylalanyl-L-phenylalanine(out) + H(+)(out) = L-phenylalanyl-L-phenylalanine(in) + H(+)(in). The enzyme catalyses L-lysyl-glycine(out) + H(+)(out) = L-lysyl-glycine(in) + H(+)(in). It carries out the reaction L-tyrosylglycine(out) + H(+)(out) = L-tyrosylglycine(in) + H(+)(in). It catalyses the reaction L-alanyl-L-aspartate(out) + 2 H(+)(out) = L-alanyl-L-aspartate(in) + 2 H(+)(in). The catalysed reaction is L-aspartyl-glycine(out) + 2 H(+)(out) = L-aspartyl-glycine(in) + 2 H(+)(in). The enzyme catalyses glycyl-L-aspartate(out) + 2 H(+)(out) = glycyl-L-aspartate(in) + 2 H(+)(in). It carries out the reaction glycyl-L-glutamate(out) + 2 H(+)(out) = glycyl-L-glutamate(in) + 2 H(+)(in). It catalyses the reaction L-alanyl-L-leucyl-L-alanine(out) + H(+)(out) = L-alanyl-L-leucyl-L-alanine(in) + H(+)(in). The catalysed reaction is L-alanyl-L-prolylglycine(out) + H(+)(out) = L-alanyl-L-prolylglycine(in) + H(+)(in). The enzyme catalyses glycylglycyl-L-isoleucine(out) + H(+)(out) = glycylglycyl-L-isoleucine(in) + H(+)(in). It carries out the reaction glycylglycyl-L-proline(out) + H(+)(out) = glycylglycyl-L-proline(in) + H(+)(in). It catalyses the reaction L-methionyl-L-phenylalanyl-L-methionine(out) + H(+)(out) = L-methionyl-L-phenylalanyl-L-methionine(in) + H(+)(in). The catalysed reaction is N-acetyl-D-muramoyl-L-alanyl-D-isoglutamine(out) + 2 H(+)(out) = N-acetyl-D-muramoyl-L-alanyl-D-isoglutamine(in) + 2 H(+)(in). The enzyme catalyses N(alpha)-formyl-L-methionyl-L-leucyl-L-phenylalanine(out) + 2 H(+)(out) = N(alpha)-formyl-L-methionyl-L-leucyl-L-phenylalanine(in) + 2 H(+)(in). Functionally, electrogenic proton-coupled amino-acid transporter that transports oligopeptides of 2 to 4 amino acids with a preference for dipeptides. Transports neutral and monovalently charged peptides with a proton to peptide stoichiometry of 1:1 or 2:1. Primarily responsible for the absorption of dietary di- and tripeptides from the small intestinal lumen. Mediates transepithelial transport of muramyl and N-formylated bacterial dipeptides contributing to recognition of pathogenic bacteria by the mucosal immune system. This Canis lupus familiaris (Dog) protein is Solute carrier family 15 member 1 (SLC15A1).